Consider the following 568-residue polypeptide: Matrix metalloproteinase-21 (568 aa).

A signal peptide spans 1 to 24 (MLAASVLRLTLPLCWLVAPQPTQP). The propeptide occupies 25 to 143 (ERLFHSRDRS…SLGLRPRARQ (119 aa)). The Cysteine switch motif lies at 110 to 117 (PRCGVPDT). Cysteine 112 and histidine 282 together coordinate Zn(2+). Glutamate 283 is a catalytic residue. Zn(2+) is bound by residues histidine 286 and histidine 292. Cysteine 328 and cysteine 559 form a disulfide bridge. Hemopexin repeat units follow at residues 329–388 (KGSF…WRGI), 390–446 (TQSI…FPGI), 447–495 (PSPL…FPAI), and 502–558 (FRNL…WFDV). N-linked (GlcNAc...) asparagine glycosylation occurs at asparagine 371.

The protein belongs to the peptidase M10A family. The cofactor is Zn(2+). Requires Ca(2+) as cofactor. Post-translationally, the precursor is cleaved by a furin endopeptidase.

Its subcellular location is the secreted. Plays a specialized role in the generation of left-right asymmetry during embryogenesis. May act as a negative regulator of the NOTCH-signaling pathway. Cleaves alpha-1-antitrypsin. The chain is Matrix metalloproteinase-21 (Mmp21) from Mus musculus (Mouse).